Here is a 320-residue protein sequence, read N- to C-terminus: F-box protein At2g02240 (320 aa).

Residues 58–104 form the F-box domain; it reads TSPFDVLPEDCISNIISFTSPRDACVAASVSKTFESAVSSDCVWDKF.

This chain is F-box protein At2g02240, found in Arabidopsis thaliana (Mouse-ear cress).